Reading from the N-terminus, the 166-residue chain is Putative universal stress protein SE_1385 (166 aa).

Belongs to the universal stress protein A family.

The protein localises to the cytoplasm. The protein is Putative universal stress protein SE_1385 of Staphylococcus epidermidis (strain ATCC 12228 / FDA PCI 1200).